Consider the following 137-residue polypeptide: uncharacterized protein (137 aa).

Belongs to the ycf72 family.

The protein resides in the plastid. The protein localises to the chloroplast. This is an uncharacterized protein from Saccharum hybrid (Sugarcane).